The chain runs to 144 residues: Apidaecins type 22 (144 aa).

The N-terminal stretch at 1–19 (MKNFALAILVVTFVVAVFG) is a signal peptide. 4 consecutive propeptides follow at residues 20-42 (NTNL…EAEP), 63-70 (EAEPEAEP), 91-98 (EAEPEAEP), and 119-126 (EAEPEAEP). The segment at 20–144 (NTNLDPPTRP…PQPRPPHPRI (125 aa)) is disordered. Residues 134–144 (IPQPRPPHPRI) are compositionally biased toward pro residues.

This sequence belongs to the apidaecin family.

It is found in the secreted. In terms of biological role, apidaecins have bactericidal activity; predominantly against Gram-negative bacteria. They seem to interfere with cell propagation. The protein is Apidaecins type 22 of Apis mellifera (Honeybee).